Consider the following 276-residue polypeptide: Large ribosomal subunit protein uL2 (276 aa).

Disordered regions lie at residues 37-59 and 225-276; these read QFQK…GGHK and VMNP…RHKR. A compositionally biased stretch (polar residues) spans 39-49; it reads QKSGRNNNGHI. Residues 50-59 show a composition bias toward basic residues; it reads TTRHKGGGHK.

This sequence belongs to the universal ribosomal protein uL2 family. As to quaternary structure, part of the 50S ribosomal subunit. Forms a bridge to the 30S subunit in the 70S ribosome.

Its function is as follows. One of the primary rRNA binding proteins. Required for association of the 30S and 50S subunits to form the 70S ribosome, for tRNA binding and peptide bond formation. It has been suggested to have peptidyltransferase activity; this is somewhat controversial. Makes several contacts with the 16S rRNA in the 70S ribosome. The sequence is that of Large ribosomal subunit protein uL2 from Cupriavidus pinatubonensis (strain JMP 134 / LMG 1197) (Cupriavidus necator (strain JMP 134)).